Consider the following 185-residue polypeptide: Disulfide bond formation protein B (185 aa).

The Cytoplasmic segment spans residues 1 to 25 (MLLFFVILGIFVLTILKAISKQRWS). Residues 26–42 (WLLLAASALSLELSALY) form a helical membrane-spanning segment. Residues 43-60 (FQHVMQLEPCVMCVYERL) lie on the Periplasmic side of the membrane. Cysteine 52 and cysteine 55 are oxidised to a cystine. The chain crosses the membrane as a helical span at residues 61 to 76 (AMLGILLAGLIGASSP). Residues 77 to 83 (NNVFIRL) lie on the Cytoplasmic side of the membrane. The helical transmembrane segment at 84–101 (SAFLLWGISAVWGILLAI) threads the bilayer. Topologically, residues 102–156 (KHTDYQLHPSPFFTCDFFPNFPAWAPLHEWLPWLFNPTGDCSDIVWQFLGYSMPQ) are periplasmic. Residues cysteine 116 and cysteine 142 are joined by a disulfide bond. A helical transmembrane segment spans residues 157–175 (WLIVSFSLYTLLFIIFAIS). The Cytoplasmic segment spans residues 176-185 (AVLKTKKQLF).

It belongs to the DsbB family.

The protein resides in the cell inner membrane. Functionally, required for disulfide bond formation in some periplasmic proteins. Acts by oxidizing the DsbA protein. The sequence is that of Disulfide bond formation protein B from Psychromonas ingrahamii (strain DSM 17664 / CCUG 51855 / 37).